The sequence spans 182 residues: ATP synthase subunit delta (182 aa).

This sequence belongs to the ATPase delta chain family. As to quaternary structure, F-type ATPases have 2 components, F(1) - the catalytic core - and F(0) - the membrane proton channel. F(1) has five subunits: alpha(3), beta(3), gamma(1), delta(1), epsilon(1). F(0) has three main subunits: a(1), b(2) and c(10-14). The alpha and beta chains form an alternating ring which encloses part of the gamma chain. F(1) is attached to F(0) by a central stalk formed by the gamma and epsilon chains, while a peripheral stalk is formed by the delta and b chains.

Its subcellular location is the cell inner membrane. In terms of biological role, f(1)F(0) ATP synthase produces ATP from ADP in the presence of a proton or sodium gradient. F-type ATPases consist of two structural domains, F(1) containing the extramembraneous catalytic core and F(0) containing the membrane proton channel, linked together by a central stalk and a peripheral stalk. During catalysis, ATP synthesis in the catalytic domain of F(1) is coupled via a rotary mechanism of the central stalk subunits to proton translocation. Its function is as follows. This protein is part of the stalk that links CF(0) to CF(1). It either transmits conformational changes from CF(0) to CF(1) or is implicated in proton conduction. This chain is ATP synthase subunit delta, found in Sulfurihydrogenibium sp. (strain YO3AOP1).